The chain runs to 98 residues: UPF0235 protein Mmc1_3654 (98 aa).

Belongs to the UPF0235 family.

The sequence is that of UPF0235 protein Mmc1_3654 from Magnetococcus marinus (strain ATCC BAA-1437 / JCM 17883 / MC-1).